The sequence spans 270 residues: UPF0354 protein BCE_4835 (270 aa).

Belongs to the UPF0354 family.

This Bacillus cereus (strain ATCC 10987 / NRS 248) protein is UPF0354 protein BCE_4835.